The chain runs to 128 residues: MQRHMLKSKIHRAAVTHCELHYEGSCAIDEDLLEASGIIENERIDIWNINNGERFSTYAIKGERGSGMISLNGSAARRAQLGDLVIIAAFAMVDEAELQAGWKPKLVFMDDGNKIKGHRDHVPTQNWT.

Residue Ser25 is the Schiff-base intermediate with substrate; via pyruvic acid of the active site. The residue at position 25 (Ser25) is a Pyruvic acid (Ser). A substrate-binding site is contributed by Thr57. The Proton donor role is filled by Tyr58. 73–75 (GSA) lines the substrate pocket.

The protein belongs to the PanD family. As to quaternary structure, heterooctamer of four alpha and four beta subunits. Requires pyruvate as cofactor. Post-translationally, is synthesized initially as an inactive proenzyme, which is activated by self-cleavage at a specific serine bond to produce a beta-subunit with a hydroxyl group at its C-terminus and an alpha-subunit with a pyruvoyl group at its N-terminus.

The protein resides in the cytoplasm. The enzyme catalyses L-aspartate + H(+) = beta-alanine + CO2. The protein operates within cofactor biosynthesis; (R)-pantothenate biosynthesis; beta-alanine from L-aspartate: step 1/1. Its function is as follows. Catalyzes the pyruvoyl-dependent decarboxylation of aspartate to produce beta-alanine. This Burkholderia lata (strain ATCC 17760 / DSM 23089 / LMG 22485 / NCIMB 9086 / R18194 / 383) protein is Aspartate 1-decarboxylase.